We begin with the raw amino-acid sequence, 322 residues long: N-acetyl-gamma-glutamyl-phosphate reductase (322 aa).

Cys-132 is an active-site residue.

The protein belongs to the NAGSA dehydrogenase family. Type 1 subfamily.

It localises to the cytoplasm. The catalysed reaction is N-acetyl-L-glutamate 5-semialdehyde + phosphate + NADP(+) = N-acetyl-L-glutamyl 5-phosphate + NADPH + H(+). Its pathway is amino-acid biosynthesis; L-arginine biosynthesis; N(2)-acetyl-L-ornithine from L-glutamate: step 3/4. Catalyzes the NADPH-dependent reduction of N-acetyl-5-glutamyl phosphate to yield N-acetyl-L-glutamate 5-semialdehyde. This chain is N-acetyl-gamma-glutamyl-phosphate reductase, found in Parabacteroides distasonis (strain ATCC 8503 / DSM 20701 / CIP 104284 / JCM 5825 / NCTC 11152).